The following is a 382-amino-acid chain: Chaperone protein DnaJ (382 aa).

The J domain maps to 5 to 70 (DYYDLLGLSK…DKRAAYDRYG (66 aa)). The segment at 138–216 (GTKVPINYVT…CSGSGRVRDE (79 aa)) adopts a CR-type zinc-finger fold. Cys-151, Cys-154, Cys-168, Cys-171, Cys-190, Cys-193, Cys-204, and Cys-207 together coordinate Zn(2+). CXXCXGXG motif repeat units lie at residues 151 to 158 (CSSCSGSG), 168 to 175 (CNTCHGAG), 190 to 197 (CHVCNGEG), and 204 to 211 (CKKCSGSG).

The protein belongs to the DnaJ family. As to quaternary structure, homodimer. Zn(2+) serves as cofactor.

It localises to the cytoplasm. Functionally, participates actively in the response to hyperosmotic and heat shock by preventing the aggregation of stress-denatured proteins and by disaggregating proteins, also in an autonomous, DnaK-independent fashion. Unfolded proteins bind initially to DnaJ; upon interaction with the DnaJ-bound protein, DnaK hydrolyzes its bound ATP, resulting in the formation of a stable complex. GrpE releases ADP from DnaK; ATP binding to DnaK triggers the release of the substrate protein, thus completing the reaction cycle. Several rounds of ATP-dependent interactions between DnaJ, DnaK and GrpE are required for fully efficient folding. Also involved, together with DnaK and GrpE, in the DNA replication of plasmids through activation of initiation proteins. In Ehrlichia ruminantium (strain Welgevonden), this protein is Chaperone protein DnaJ.